The chain runs to 337 residues: Probable dihydroorotase (337 aa).

Zn(2+) contacts are provided by His12, His14, Lys95, His132, His170, and Asp240. At Lys95 the chain carries N6-carboxylysine.

Belongs to the metallo-dependent hydrolases superfamily. DHOase family. Class II DHOase subfamily. Zn(2+) is required as a cofactor.

It carries out the reaction (S)-dihydroorotate + H2O = N-carbamoyl-L-aspartate + H(+). The protein operates within pyrimidine metabolism; UMP biosynthesis via de novo pathway; (S)-dihydroorotate from bicarbonate: step 3/3. The polypeptide is Probable dihydroorotase (ura2) (Schizosaccharomyces pombe (strain 972 / ATCC 24843) (Fission yeast)).